We begin with the raw amino-acid sequence, 652 residues long: MGIVVLTMKASVIEMFLVLLVTGIQSNQEMTKKMKRPKFTVPQISCDVRAGKITNVEFIVKCPPGCQDPRYHVYGADVYASYSSVCGAAVHSGVLDNSGGKILVRKVAGQSGYKGSYSNGVQSLSLPRWRESFVVSEGKPQKGVTYPSSLTYSSSKSPAAKAGETARADQSPPVPGTAAQPVTVTQAPGTTAIEATHTTLPKPSPSAGSTASGLRPQPAGQRSKDLGEPALWKPESVLLDAGFVPKEELSTQSLEPASQGDPSCKVDLSFLIDGSSSIGKRRFRIQKQFLTDVAQTLDIGPAGPLMGVVQYGDNPATQFNLKTHMNSQDVKAAIEKISQRGGLSNAGRAISFVTKNFFSKFNGNRGGAPNVAVVMVDGWPTDKVEEASRLARESGVNIFFITIEGASENEKQYMLEPNFANKAVCRTNGFYSLTVQNWFSLHKTVQPLVKRVCDTDRLACSKTCLNSADIGFVIDGSSSVGTSNFRTVLQFVANLSREFEISDMDTRIGAMQYTYEQRLEFGFDEYSTKSDVLNAIKRVGYWSGGTSTGAAIHYALEQLFKKSKPNKRKLMILITDGRSYDDIRIPAMLAHHKGVITYAIGVAWAAQDELDIIATHPARDHAFFVDEFDNLYKVVPKVIQNICTEFNSQPRN.

A signal peptide spans 1 to 26 (MGIVVLTMKASVIEMFLVLLVTGIQS). Residues 40-133 (TVPQISCDVR…LSLPRWRESF (94 aa)) enclose the LCCL domain. Disulfide bonds link Cys-46-Cys-62 and Cys-66-Cys-86. Disordered stretches follow at residues 137–181 (EGKP…AAQP) and 196–231 (THTT…EPAL). Low complexity predominate over residues 145–158 (TYPSSLTYSSSKSP). The segment covering 196–212 (THTTLPKPSPSAGSTAS) has biased composition (polar residues). VWFA domains are found at residues 267 to 452 (DLSF…VKRV) and 469 to 638 (DIGF…VPKV). Asn-494 carries an N-linked (GlcNAc...) asparagine glycan.

In terms of assembly, binds dermatan sulfate and chondroitin sulfate.

It localises to the secreted. Its subcellular location is the extracellular space. It is found in the extracellular matrix. Its function is as follows. Promotes matrix assembly and cell adhesiveness. Plays a role in spinal cord formation by regulating the proliferation and differentiation of neural stem cells. The chain is Vitrin (VIT) from Bos taurus (Bovine).